The following is a 422-amino-acid chain: Serine--tRNA ligase (422 aa).

231–233 (TSE) lines the L-serine pocket. 262-264 (RQE) serves as a coordination point for ATP. Glu285 is an L-serine binding site. Residue 349 to 352 (EISS) participates in ATP binding. L-serine is bound at residue Ser384.

Belongs to the class-II aminoacyl-tRNA synthetase family. Type-1 seryl-tRNA synthetase subfamily. Homodimer. The tRNA molecule binds across the dimer.

The protein resides in the cytoplasm. The enzyme catalyses tRNA(Ser) + L-serine + ATP = L-seryl-tRNA(Ser) + AMP + diphosphate + H(+). It carries out the reaction tRNA(Sec) + L-serine + ATP = L-seryl-tRNA(Sec) + AMP + diphosphate + H(+). It functions in the pathway aminoacyl-tRNA biosynthesis; selenocysteinyl-tRNA(Sec) biosynthesis; L-seryl-tRNA(Sec) from L-serine and tRNA(Sec): step 1/1. Its function is as follows. Catalyzes the attachment of serine to tRNA(Ser). Is also able to aminoacylate tRNA(Sec) with serine, to form the misacylated tRNA L-seryl-tRNA(Sec), which will be further converted into selenocysteinyl-tRNA(Sec). This Mycoplasma capricolum subsp. capricolum (strain California kid / ATCC 27343 / NCTC 10154) protein is Serine--tRNA ligase.